The following is a 499-amino-acid chain: Type-1 glutamine synthetase 1 (499 aa).

The region spanning 50–146 (PQLKFIRVCW…IFGEFFYLDN (97 aa)) is the GS beta-grasp domain. Residues 158-499 (PRNSLQRAID…DQILKLLELF (342 aa)) enclose the GS catalytic domain.

This sequence belongs to the glutamine synthetase family.

It catalyses the reaction L-glutamate + NH4(+) + ATP = L-glutamine + ADP + phosphate + H(+). The sequence is that of Type-1 glutamine synthetase 1 (glnA1) from Dictyostelium discoideum (Social amoeba).